The sequence spans 121 residues: Putative ankyrin repeat protein L215 (121 aa).

ANK repeat units lie at residues 10–40 and 42–71; these read QYDS…SFKE and IHET…NKLV.

This chain is Putative ankyrin repeat protein L215, found in Acanthamoeba polyphaga mimivirus (APMV).